The chain runs to 170 residues: uncharacterized protein (170 aa).

3 helical membrane-spanning segments follow: residues 6 to 26, 31 to 51, and 91 to 111; these read PFYF…ILLI, LLFI…LIYI, and IYFS…IVAF.

It to M.jannaschii MJ1249.1, MJ0210.1 and MJ0785.1.

The protein localises to the cell membrane. This is an uncharacterized protein from Methanocaldococcus jannaschii (strain ATCC 43067 / DSM 2661 / JAL-1 / JCM 10045 / NBRC 100440) (Methanococcus jannaschii).